Reading from the N-terminus, the 179-residue chain is MAKLHDYYKSSVVAELTKQFSYTSVMQVPRIEKITLNMGVGEAINDKKLLENAASDMAIISGQKPLITKARKSVAGFKIREGYPIGCKVTLRGERMWDFLERLISIALPRVRDFRGVNGKSFDGRGNYSMGVREQIIFPEIDYDKVDRVRGLDITITTTAGTDEEGRALLAAFNFPFRK.

It belongs to the universal ribosomal protein uL5 family. As to quaternary structure, part of the 50S ribosomal subunit; part of the 5S rRNA/L5/L18/L25 subcomplex. Contacts the 5S rRNA and the P site tRNA. Forms a bridge to the 30S subunit in the 70S ribosome.

This is one of the proteins that bind and probably mediate the attachment of the 5S RNA into the large ribosomal subunit, where it forms part of the central protuberance. In the 70S ribosome it contacts protein S13 of the 30S subunit (bridge B1b), connecting the 2 subunits; this bridge is implicated in subunit movement. Contacts the P site tRNA; the 5S rRNA and some of its associated proteins might help stabilize positioning of ribosome-bound tRNAs. This chain is Large ribosomal subunit protein uL5, found in Vibrio cholerae serotype O1 (strain ATCC 39541 / Classical Ogawa 395 / O395).